The primary structure comprises 174 residues: uncharacterized protein (174 aa).

Transmembrane regions (helical) follow at residues 29–51 (FAVE…GFWY) and 66–83 (VIVI…VTKI).

The protein resides in the cell membrane. This is an uncharacterized protein from Bacillus subtilis (strain 168).